A 471-amino-acid polypeptide reads, in one-letter code: Arginine biosynthesis bifunctional protein ArgJ, mitochondrial (471 aa).

Residues 1-33 constitute a mitochondrion transit peptide; that stretch reads MAMAGCNGFFLHQLRQPRLQLARQLGRTPSRAY. Substrate is bound by residues Thr-201, Lys-230, Thr-241, Glu-327, Asn-466, and Thr-471. Thr-241 serves as the catalytic Nucleophile.

It belongs to the ArgJ family. As to quaternary structure, heterodimer of an alpha and a beta chain. The alpha and beta chains are autoproteolytically processed from a single precursor protein within the mitochondrion.

It is found in the mitochondrion matrix. The enzyme catalyses N(2)-acetyl-L-ornithine + L-glutamate = N-acetyl-L-glutamate + L-ornithine. The catalysed reaction is L-glutamate + acetyl-CoA = N-acetyl-L-glutamate + CoA + H(+). It functions in the pathway amino-acid biosynthesis; L-arginine biosynthesis; L-ornithine and N-acetyl-L-glutamate from L-glutamate and N(2)-acetyl-L-ornithine (cyclic): step 1/1. The protein operates within amino-acid biosynthesis; L-arginine biosynthesis; N(2)-acetyl-L-ornithine from L-glutamate: step 1/4. Its function is as follows. Catalyzes two activities which are involved in the cyclic version of arginine biosynthesis: the synthesis of acetylglutamate from glutamate and acetyl-CoA, and of ornithine by transacetylation between acetylornithine and glutamate. The polypeptide is Arginine biosynthesis bifunctional protein ArgJ, mitochondrial (Chaetomium globosum (strain ATCC 6205 / CBS 148.51 / DSM 1962 / NBRC 6347 / NRRL 1970) (Soil fungus)).